Consider the following 347-residue polypeptide: tRNA dimethylallyltransferase (347 aa).

20–27 is an ATP binding site; it reads GPTASGKT. 22–27 lines the substrate pocket; that stretch reads TASGKT. Interaction with substrate tRNA stretches follow at residues 45 to 48, 169 to 173, and 275 to 280; these read DSAM, QRLMR, and RCVGYR.

It belongs to the IPP transferase family. As to quaternary structure, monomer. Mg(2+) serves as cofactor.

The enzyme catalyses adenosine(37) in tRNA + dimethylallyl diphosphate = N(6)-dimethylallyladenosine(37) in tRNA + diphosphate. Catalyzes the transfer of a dimethylallyl group onto the adenine at position 37 in tRNAs that read codons beginning with uridine, leading to the formation of N6-(dimethylallyl)adenosine (i(6)A). This is tRNA dimethylallyltransferase from Marinobacter nauticus (strain ATCC 700491 / DSM 11845 / VT8) (Marinobacter aquaeolei).